The primary structure comprises 163 residues: Small ribosomal subunit protein uS3m (163 aa).

The transit peptide at 1–31 directs the protein to the mitochondrion; that stretch reads MAASLIRQTKLLSVFSSAGCFRSIHSTAACL.

Belongs to the universal ribosomal protein uS3 family. In terms of assembly, component of the mitochondrial ribosome small subunit (28S) which comprises a 12S rRNA and about 30 distinct proteins.

The protein localises to the mitochondrion. The polypeptide is Small ribosomal subunit protein uS3m (mrps24) (Danio rerio (Zebrafish)).